A 156-amino-acid chain; its full sequence is 6,7-dimethyl-8-ribityllumazine synthase (156 aa).

5-amino-6-(D-ribitylamino)uracil is bound by residues F22, 57–59, and 81–83; these read AYE and TVI. 86-87 lines the (2S)-2-hydroxy-3-oxobutyl phosphate pocket; that stretch reads GT. H89 functions as the Proton donor in the catalytic mechanism. F114 serves as a coordination point for 5-amino-6-(D-ribitylamino)uracil. (2S)-2-hydroxy-3-oxobutyl phosphate is bound at residue R128.

The protein belongs to the DMRL synthase family. Forms an icosahedral capsid composed of 60 subunits, arranged as a dodecamer of pentamers.

It carries out the reaction (2S)-2-hydroxy-3-oxobutyl phosphate + 5-amino-6-(D-ribitylamino)uracil = 6,7-dimethyl-8-(1-D-ribityl)lumazine + phosphate + 2 H2O + H(+). Its pathway is cofactor biosynthesis; riboflavin biosynthesis; riboflavin from 2-hydroxy-3-oxobutyl phosphate and 5-amino-6-(D-ribitylamino)uracil: step 1/2. Its function is as follows. Catalyzes the formation of 6,7-dimethyl-8-ribityllumazine by condensation of 5-amino-6-(D-ribitylamino)uracil with 3,4-dihydroxy-2-butanone 4-phosphate. This is the penultimate step in the biosynthesis of riboflavin. The protein is 6,7-dimethyl-8-ribityllumazine synthase of Yersinia enterocolitica serotype O:8 / biotype 1B (strain NCTC 13174 / 8081).